Here is a 244-residue protein sequence, read N- to C-terminus: MGQKVNPISNRLGIIRGWDSNWYGGNDYGDSLLEDSKIRKYLNARLAKASVSRIVIERTLKLVTITVCTARPGIIIGKGGQEVDKLKEELKKVTDKDIQINIFEVKRPELDAVIVANNIARQVEGKIAYRRAIKMAIANTMRMGAEGIKIQISGRLNGAEMARSEMYKEGRTPLHTFRADIDYCHAEALTKVGLLGIKVWICRGEVFGKRELAPNFTQSKESGRGNNGGNNGGGKNFKRKKNNR.

Positions 38 to 106 constitute a KH type-2 domain; it reads IRKYLNARLA…DIQINIFEVK (69 aa). Positions 217–244 are disordered; it reads TQSKESGRGNNGGNNGGGKNFKRKKNNR. Over residues 225–235 the composition is skewed to gly residues; sequence GNNGGNNGGGK.

It belongs to the universal ribosomal protein uS3 family. In terms of assembly, part of the 30S ribosomal subunit. Forms a tight complex with proteins S10 and S14.

Functionally, binds the lower part of the 30S subunit head. Binds mRNA in the 70S ribosome, positioning it for translation. This Bacteroides fragilis (strain ATCC 25285 / DSM 2151 / CCUG 4856 / JCM 11019 / LMG 10263 / NCTC 9343 / Onslow / VPI 2553 / EN-2) protein is Small ribosomal subunit protein uS3.